The primary structure comprises 1123 residues: Proline-, glutamic acid- and leucine-rich protein 1 (1123 aa).

N-acetylalanine is present on alanine 2. Residues 2–80 (AAAVLSGASA…CLLRLHGTAG (79 aa)) form a required for modulation of ESR1 transcriptional activity region. Serine 13 carries the post-translational modification Phosphoserine. Short sequence motifs (LXXLL motif) lie at residues 33–37 (LRLLL), 69–73 (LMCLL), 111–115 (LLSLL), 155–159 (LRDLL), 177–181 (LPGLL), 264–268 (LHSLL), 271–275 (LHSLL), 365–369 (LRLLL), and 460–464 (LTHLL). A required for modulation of ESR1 transcriptional activity region spans residues 121–189 (TELFQQHCVS…LLTSLLGLRP (69 aa)). Serine 478 and serine 482 each carry phosphoserine. Short sequence motifs (LXXLL motif) lie at residues 580–584 (LYRLL) and 585–589 (LALLL). Disordered regions lie at residues 639 to 767 (LQSS…GRVP) and 779 to 1123 (ASDV…EPDS). The segment covering 646 to 657 (CPTPAPVPPPEA) has biased composition (pro residues). Residue threonine 751 is modified to Phosphothreonine. Serine 755 is modified (phosphoserine). Positions 780–792 (SDVEISLESDSDD) are enriched in acidic residues. Pro residues-rich tracts occupy residues 803–829 (SLPP…PPVP) and 840–865 (TPGP…PPQL). Over residues 891–962 (SDEEEEEEEE…EELDEVEDVE (72 aa)) the composition is skewed to acidic residues. Residues 973 to 987 (GPPPPTLPPALPPSD) are compositionally biased toward pro residues. Residues serine 1029 and serine 1039 each carry the phosphoserine modification.

Belongs to the RIX1/PELP1 family. Interacts with HRS, RXRA, SUMO2, HDAC2, RB1 and STAT3. Interacts with PI3K, SRC and EGFR in cytoplasm. Interacts with ESR1, the interaction is enhanced by 17-beta-estradiol; the interaction increases ESR1 transcriptional activity. Interacts with CREBBP and EP300 in a ligand-dependent manner. Forms two complexes in the presence of 17-beta-estradiol; one with SRC and ESR1 and another with LCK and ESR1. Interacts with histone H1 and H3 with a greater affinity for H1. Component of some MLL1/MLL complex, at least composed of the core components KMT2A/MLL1, ASH2L, HCFC1/HCF1, WDR5 and RBBP5, as well as the facultative components BACC1, CHD8, E2F6, HSP70, INO80C, KANSL1, LAS1L, MAX, MCRS1, MGA, KAT8/MOF, PELP1, PHF20, PRP31, RING2, RUVB1/TIP49A, RUVB2/TIP49B, SENP3, TAF1, TAF4, TAF6, TAF7, TAF9 and TEX10. Core component of the 5FMC complex, at least composed of PELP1, LAS1L, TEX10, WDR18 and SENP3; the complex interacts with methylated CHTOP and ZNF148. Interacts with NOL9. Interacts with BCAS3. Component of the PELP1 complex, composed of at least PELP1, TEX10 and WDR18. The complex interacts (via PELP1) with MDN1 (via its hexameric AAA ATPase ring) and the pre-60S ribosome particles. In terms of processing, transiently sumoylated, preferentially conjugated to SUMO2 or SUMO3. Sumoylation causes nucleolar exclusion of PELP1 and promotes the recruitment of MDN1 to pre-60S particles. Desumoylation by SUMO isopeptidase SENP3 is needed to release both PELP1 and MDN1 from pre-ribosomes. Widely expressed with high levels in testis, ovary, uterus and pituitary gland.

It is found in the nucleus. The protein localises to the nucleolus. The protein resides in the nucleoplasm. It localises to the cytoplasm. In terms of biological role, coactivator of estrogen receptor-mediated transcription and a corepressor of other nuclear hormone receptors and sequence-specific transcription factors. Plays a role in estrogen receptor (ER) genomic activity when present in the nuclear compartment by activating the ER target genes in a hormonal stimulation dependent manner. Can facilitate ER non-genomic signaling via SRC and PI3K interaction in the cytosol. Plays a role in E2-mediated cell cycle progression by interacting with RB1. May have important functional implications in ER/growth factor cross-talk. Interacts with several growth factor signaling components including EGFR and HRS. Functions as the key stabilizing component of the Five Friends of Methylated CHTOP (5FMC) complex; the 5FMC complex is recruited to ZNF148 by methylated CHTOP, leading to desumoylation of ZNF148 and subsequent transactivation of ZNF148 target genes. Component of the PELP1 complex involved in the nucleolar steps of 28S rRNA maturation and the subsequent nucleoplasmic transit of the pre-60S ribosomal subunit. Regulates pre-60S association of the critical remodeling factor MDN1. This chain is Proline-, glutamic acid- and leucine-rich protein 1 (Pelp1), found in Mus musculus (Mouse).